We begin with the raw amino-acid sequence, 102 residues long: Large ribosomal subunit protein bL21 (102 aa).

This sequence belongs to the bacterial ribosomal protein bL21 family. Part of the 50S ribosomal subunit. Contacts protein L20.

Its function is as follows. This protein binds to 23S rRNA in the presence of protein L20. This is Large ribosomal subunit protein bL21 from Ehrlichia canis (strain Jake).